The chain runs to 358 residues: Protein-glutamate methylesterase/protein-glutamine glutaminase 1 (358 aa).

The Response regulatory domain maps to 7-124 (SVLLVDDSAV…KNFLIDSAAE (118 aa)). Asp58 bears the 4-aspartylphosphate mark. In terms of domain architecture, CheB-type methylesterase spans 170 to 358 (AQTTERIVAI…QEIHQAILHR (189 aa)). Catalysis depends on residues Ser182, His208, and Asp304.

The protein belongs to the CheB family. In terms of processing, phosphorylated by CheA. Phosphorylation of the N-terminal regulatory domain activates the methylesterase activity.

Its subcellular location is the cytoplasm. The catalysed reaction is [protein]-L-glutamate 5-O-methyl ester + H2O = L-glutamyl-[protein] + methanol + H(+). It carries out the reaction L-glutaminyl-[protein] + H2O = L-glutamyl-[protein] + NH4(+). Its function is as follows. Involved in chemotaxis. Part of a chemotaxis signal transduction system that modulates chemotaxis in response to various stimuli. Catalyzes the demethylation of specific methylglutamate residues introduced into the chemoreceptors (methyl-accepting chemotaxis proteins or MCP) by CheR. Also mediates the irreversible deamidation of specific glutamine residues to glutamic acid. The polypeptide is Protein-glutamate methylesterase/protein-glutamine glutaminase 1 (Pseudomonas savastanoi pv. phaseolicola (strain 1448A / Race 6) (Pseudomonas syringae pv. phaseolicola (strain 1448A / Race 6))).